Here is a 130-residue protein sequence, read N- to C-terminus: L-ectoine synthase (130 aa).

Belongs to the ectoine synthase family.

It catalyses the reaction (2S)-4-acetamido-2-aminobutanoate = L-ectoine + H2O. Its pathway is amine and polyamine biosynthesis; ectoine biosynthesis; L-ectoine from L-aspartate 4-semialdehyde: step 3/3. In terms of biological role, catalyzes the circularization of gamma-N-acetyl-alpha,gamma-diaminobutyric acid (ADABA) to ectoine (1,4,5,6-tetrahydro-2-methyl-4-pyrimidine carboxylic acid), which is an excellent osmoprotectant. This chain is L-ectoine synthase, found in Desulfatibacillum aliphaticivorans.